Reading from the N-terminus, the 514-residue chain is 2-isopropylmalate synthase (514 aa).

The Pyruvate carboxyltransferase domain occupies 8 to 270 (IRIFDTTLRD…DCGVVTEQLF (263 aa)). Asp17, His205, His207, and Asn241 together coordinate Mn(2+). The regulatory domain stretch occupies residues 394–514 (RLVNLSVQCS…KEEEQEKEGI (121 aa)).

The protein belongs to the alpha-IPM synthase/homocitrate synthase family. LeuA type 1 subfamily. As to quaternary structure, homodimer. It depends on Mn(2+) as a cofactor.

It is found in the cytoplasm. It catalyses the reaction 3-methyl-2-oxobutanoate + acetyl-CoA + H2O = (2S)-2-isopropylmalate + CoA + H(+). It functions in the pathway amino-acid biosynthesis; L-leucine biosynthesis; L-leucine from 3-methyl-2-oxobutanoate: step 1/4. Functionally, catalyzes the condensation of the acetyl group of acetyl-CoA with 3-methyl-2-oxobutanoate (2-ketoisovalerate) to form 3-carboxy-3-hydroxy-4-methylpentanoate (2-isopropylmalate). This is 2-isopropylmalate synthase from Nitratidesulfovibrio vulgaris (strain DSM 19637 / Miyazaki F) (Desulfovibrio vulgaris).